Reading from the N-terminus, the 134-residue chain is Small ribosomal subunit protein uS11 (134 aa).

Positions 114–134 (DVTPVPSDSTRRKGGRRGRRL) are disordered. A compositionally biased stretch (basic residues) spans 125–134 (RKGGRRGRRL).

It belongs to the universal ribosomal protein uS11 family.

This is Small ribosomal subunit protein uS11 (RPS14) from Candida albicans (Yeast).